The following is a 470-amino-acid chain: Ribosomal protein uS12 methylthiotransferase RimO (470 aa).

The interval 1–27 (MPCQAPHSDSNVKNPSEATNQKDHSPR) is disordered. The segment covering 7-19 (HSDSNVKNPSEAT) has biased composition (polar residues). An MTTase N-terminal domain is found at 26 to 141 (PRVGFVSLGC…VMQAVHTHLP (116 aa)). [4Fe-4S] cluster is bound by residues cysteine 35, cysteine 71, cysteine 100, cysteine 172, cysteine 176, and cysteine 179. The Radical SAM core domain occupies 158–399 (LTPKHYAYLK…MEVAEAVSAR (242 aa)). A TRAM domain is found at 402-470 (QRKVGQTLRV…ADGHDLWGEV (69 aa)).

The protein belongs to the methylthiotransferase family. RimO subfamily. [4Fe-4S] cluster is required as a cofactor.

It localises to the cytoplasm. The enzyme catalyses L-aspartate(89)-[ribosomal protein uS12]-hydrogen + (sulfur carrier)-SH + AH2 + 2 S-adenosyl-L-methionine = 3-methylsulfanyl-L-aspartate(89)-[ribosomal protein uS12]-hydrogen + (sulfur carrier)-H + 5'-deoxyadenosine + L-methionine + A + S-adenosyl-L-homocysteine + 2 H(+). In terms of biological role, catalyzes the methylthiolation of an aspartic acid residue of ribosomal protein uS12. The chain is Ribosomal protein uS12 methylthiotransferase RimO from Cupriavidus taiwanensis (strain DSM 17343 / BCRC 17206 / CCUG 44338 / CIP 107171 / LMG 19424 / R1) (Ralstonia taiwanensis (strain LMG 19424)).